The sequence spans 257 residues: Diacetyl reductase [(S)-acetoin forming] (257 aa).

Residue 6–30 (IITGSAGGLGKGIAERLANDGFNIV) participates in NAD(+) binding. Ser-139 lines the substrate pocket. The active-site Proton acceptor is Tyr-152. Lys-156 is a catalytic residue.

Belongs to the short-chain dehydrogenases/reductases (SDR) family.

The enzyme catalyses (S)-acetoin + NAD(+) = diacetyl + NADH + H(+). In terms of biological role, catalyzes the irreversible reduction of 2,3-butanediol to (S)-acetoin in the presence of NADH. This is Diacetyl reductase [(S)-acetoin forming] (butA) from Staphylococcus epidermidis (strain ATCC 35984 / DSM 28319 / BCRC 17069 / CCUG 31568 / BM 3577 / RP62A).